Reading from the N-terminus, the 295-residue chain is Calcium-regulated actin-bundling protein (295 aa).

Monomer.

Its function is as follows. May contribute to the structure and reorganization of filopodia and pseudopodia accompanying cell movements. In Dictyostelium discoideum (Social amoeba), this protein is Calcium-regulated actin-bundling protein (abpB).